The primary structure comprises 617 residues: Dopamine beta-hydroxylase (617 aa).

Over 1-16 (MPALSRWASLPGPSMR) the chain is Cytoplasmic. A helical; Signal-anchor for type II membrane protein transmembrane segment spans residues 17–37 (EAAFMYSTAVAIFLVILVAAL). At 38–617 (QGSAPRESPL…TVVSIGGGKG (580 aa)) the chain is on the intragranular side. The DOMON domain occupies 57-173 (GSLELSWNVS…GTVHLVYGIL (117 aa)). N-linked (GlcNAc...) asparagine glycosylation is present at Asn-64. Cystine bridges form between Cys-154–Cys-596, Cys-232–Cys-283, Cys-269–Cys-295, Cys-390–Cys-503, Cys-394–Cys-565, and Cys-466–Cys-488. Asn-184 is a glycosylation site (N-linked (GlcNAc...) (complex) asparagine). The active site involves Tyr-230. 2 residues coordinate Cu(2+): His-262 and His-263. Residue His-333 coordinates Cu(2+). N-linked (GlcNAc...) asparagine glycosylation is present at Asn-344. Residue His-412 is part of the active site. Residues His-412, His-414, and Met-487 each coordinate Cu(2+). N-linked (GlcNAc...) asparagine glycosylation is present at Asn-566. The interval 590–617 (EEPTPQCPTSQGRSPAGPTVVSIGGGKG) is disordered.

This sequence belongs to the copper type II ascorbate-dependent monooxygenase family. As to quaternary structure, homotetramer; composed of two disulfide-linked dimers. Cu(2+) is required as a cofactor. In terms of processing, N-glycosylated. Post-translationally, proteolytic cleavage after the membrane-anchor leads to the release of the soluble form.

It is found in the cytoplasmic vesicle. The protein localises to the secretory vesicle lumen. It localises to the secretory vesicle. The protein resides in the chromaffin granule lumen. Its subcellular location is the secreted. It is found in the secretory vesicle membrane. The protein localises to the chromaffin granule membrane. The enzyme catalyses dopamine + 2 L-ascorbate + O2 = (R)-noradrenaline + 2 monodehydro-L-ascorbate radical + H2O. The protein operates within catecholamine biosynthesis; (R)-noradrenaline biosynthesis; (R)-noradrenaline from dopamine: step 1/1. Functionally, catalyzes the hydroxylation of dopamine to noradrenaline (also known as norepinephrine), and is thus vital for regulation of these neurotransmitters. The protein is Dopamine beta-hydroxylase (DBH) of Homo sapiens (Human).